Reading from the N-terminus, the 122-residue chain is Small ribosomal subunit protein uS13 (122 aa).

Residues proline 97–lysine 122 are disordered.

It belongs to the universal ribosomal protein uS13 family. As to quaternary structure, part of the 30S ribosomal subunit. Forms a loose heterodimer with protein S19. Forms two bridges to the 50S subunit in the 70S ribosome.

In terms of biological role, located at the top of the head of the 30S subunit, it contacts several helices of the 16S rRNA. In the 70S ribosome it contacts the 23S rRNA (bridge B1a) and protein L5 of the 50S subunit (bridge B1b), connecting the 2 subunits; these bridges are implicated in subunit movement. Contacts the tRNAs in the A and P-sites. In Bartonella bacilliformis (strain ATCC 35685 / KC583 / Herrer 020/F12,63), this protein is Small ribosomal subunit protein uS13.